Consider the following 645-residue polypeptide: Sodium/potassium/calcium exchanger 3 (645 aa).

The signal sequence occupies residues 1–43 (MPPPGDQDCARRRSRRRRRDLLLSQLCFLASVALLLWSLSSLR). Topologically, residues 44-106 (EQKELDLMDL…DIFSNEDRRQ (63 aa)) are extracellular. N-linked (GlcNAc...) asparagine glycans are attached at residues N70 and N85. The chain crosses the membrane as a helical span at residues 107–127 (GAVVLHVLCAMYMFYALAIVC). Residues 128–151 (DDFFVPSLEKICERLHLSEDVAGA) lie on the Cytoplasmic side of the membrane. Residues 148-188 (VAGATFMAAGSSAPELFTSVIGVFITKGDVGVGTIVGSAVF) form an Alpha-1 repeat. A helical membrane pass occupies residues 152–172 (TFMAAGSSAPELFTSVIGVFI). The Extracellular portion of the chain corresponds to 173-181 (TKGDVGVGT). A helical transmembrane segment spans residues 182–202 (IVGSAVFNILCIIGVCGLFAG). At 203-209 (QVVALSS) the chain is on the cytoplasmic side. Residues 210-230 (WCLLRDSIYYTLSVVALIVFI) traverse the membrane as a helical segment. The Extracellular portion of the chain corresponds to 231 to 234 (YDEK). The chain crosses the membrane as a helical span at residues 235 to 255 (VSWWESLVLVLMYLIYIVIMK). Residues 256–486 (YNACIHQCFE…WFMVTFASST (231 aa)) lie on the Cytoplasmic side of the membrane. S307 bears the Phosphoserine mark. 2 disordered regions span residues 379-398 (TVENGTGPSSAPDRGVNGTR) and 404-442 (AETDNETENENEDNENNENDEEEEEDEDDDEGPYTPFDP). Positions 404–435 (AETDNETENENEDNENNENDEEEEEDEDDDEG) are enriched in acidic residues. The chain crosses the membrane as a helical span at residues 487-507 (LWIAAFSYMMVWMVTIIGYTL). Residues 508–512 (GIPDV) lie on the Extracellular side of the membrane. The chain crosses the membrane as a helical span at residues 513–533 (IMGITFLAAGTSVPDCMASLI). Residues 520–551 (AAGTSVPDCMASLIVARQGMGDMAVSNSIGSN) form an Alpha-2 repeat. Topologically, residues 534-551 (VARQGMGDMAVSNSIGSN) are cytoplasmic. A helical membrane pass occupies residues 552 to 572 (VFDILIGLGLPWALQTLAVDY). Topologically, residues 573–582 (GSYIRLNSRG) are extracellular. Residues 583 to 603 (LIYSVGLLLASVFVTVFGVHL) form a helical membrane-spanning segment. Topologically, residues 604 to 617 (NKWQLDKKLGCGCL) are cytoplasmic. A helical membrane pass occupies residues 618 to 638 (FLYGVFLCFSIMTEFNVFTFV). Residues 639–645 (NLPMCGD) lie on the Extracellular side of the membrane.

Belongs to the Ca(2+):cation antiporter (CaCA) (TC 2.A.19) family. SLC24A subfamily. As to expression, abundant in the brain. Highest levels found in selected thalamic nuclei, hippocampal CA1 neurons and in layer IV of the cerebral cortex. Expressed in dental tissues.

The protein resides in the cell membrane. The catalysed reaction is Ca(2+)(out) + K(+)(out) + 4 Na(+)(in) = Ca(2+)(in) + K(+)(in) + 4 Na(+)(out). Its function is as follows. Calcium, potassium:sodium antiporter that transports 1 Ca(2+) and 1 K(+) in exchange for 4 Na(+). In Mus musculus (Mouse), this protein is Sodium/potassium/calcium exchanger 3 (Slc24a3).